The sequence spans 525 residues: MNTANFPWLTTIILLPIAASLLIPIIPDKDGKTIRWYALIVGLIDFALIVYAFYTSYDFANPDLQLVESYPWVPQLDLNWSVGADGLSMPLIILTGFITTLATLAAWPVTLKPRLFYFLLLAMYGGQIAVFAVQDLLLFFLVWELELIPVYLLLAIWGGKKRQYAATKFILYTAGGSLFILLAALTMAFYGDNVTFDMRSLALKDYALNFQLLLYAGFLIAYAIKLPIIPLHTWLPDAHGEATAPAHMLLAGILLKMGGYALIRMNAGILPDAHAYFAPVLVVLGVVNIIYAALTSFAQRNLKRKIAYSSISHMGFVIIGFASFTDLGLSGAVLQMVSHGLIGASLFFLVGATYDRTHTLMLDEMGGVGKRMPKIFAMFTACSMASLALPGMSGFVAELMVFVGFATSDAYSSTFKVIVVFLMAVGVILTPIYLLSMLREIFYGKENEELVSHQQLIDAEPREVFVIACLLVPIIGIGFYPKLLTQMYDATTVQLTARLRDSVPTLAQEKPEAPKVSLSAPVIGN.

Transmembrane regions (helical) follow at residues 6–26 (FPWLTTIILLPIAASLLIPII), 36–56 (WYALIVGLIDFALIVYAFYTS), 91–111 (LIILTGFITTLATLAAWPVTL), 115–135 (LFYFLLLAMYGGQIAVFAVQD), 136–156 (LLLFFLVWELELIPVYLLLAI), 169–189 (FILYTAGGSLFILLAALTMAF), 212–232 (LLLYAGFLIAYAIKLPIIPLH), 243–263 (TAPAHMLLAGILLKMGGYALI), 277–297 (FAPVLVVLGVVNIIYAALTSF), 314–334 (MGFVIIGFASFTDLGLSGAVL), 335–355 (QMVSHGLIGASLFFLVGATYD), 375–397 (IFAMFTACSMASLALPGMSGFVA), 417–437 (VIVVFLMAVGVILTPIYLLSM), and 464–484 (VFVIACLLVPIIGIGFYPKLL).

Belongs to the complex I subunit 4 family.

It localises to the cellular thylakoid membrane. It catalyses the reaction a plastoquinone + NADH + (n+1) H(+)(in) = a plastoquinol + NAD(+) + n H(+)(out). The enzyme catalyses a plastoquinone + NADPH + (n+1) H(+)(in) = a plastoquinol + NADP(+) + n H(+)(out). Functionally, NDH-1 shuttles electrons from NAD(P)H, via FMN and iron-sulfur (Fe-S) centers, to quinones in the respiratory chain. The immediate electron acceptor for the enzyme in this species is believed to be plastoquinone. Couples the redox reaction to proton translocation (for every two electrons transferred, four hydrogen ions are translocated across the cytoplasmic membrane), and thus conserves the redox energy in a proton gradient. In Trichormus variabilis (strain ATCC 29413 / PCC 7937) (Anabaena variabilis), this protein is NAD(P)H-quinone oxidoreductase chain 4 1.